A 505-amino-acid chain; its full sequence is Glycerol kinase (505 aa).

Thr17 provides a ligand contact to ADP. ATP is bound by residues Thr17, Thr18, and Ser19. Thr17 is a binding site for sn-glycerol 3-phosphate. Arg21 contributes to the ADP binding site. Residues Arg87, Glu88, Tyr139, and Asp250 each coordinate sn-glycerol 3-phosphate. Glycerol contacts are provided by Arg87, Glu88, Tyr139, Asp250, and Gln251. Residues Thr272 and Gly315 each contribute to the ADP site. The ATP site is built by Thr272, Gly315, Gln319, and Gly416. The ADP site is built by Gly416 and Asn420.

It belongs to the FGGY kinase family.

It catalyses the reaction glycerol + ATP = sn-glycerol 3-phosphate + ADP + H(+). It functions in the pathway polyol metabolism; glycerol degradation via glycerol kinase pathway; sn-glycerol 3-phosphate from glycerol: step 1/1. Inhibited by fructose 1,6-bisphosphate (FBP). In terms of biological role, key enzyme in the regulation of glycerol uptake and metabolism. Catalyzes the phosphorylation of glycerol to yield sn-glycerol 3-phosphate. This is Glycerol kinase from Azotobacter vinelandii (strain DJ / ATCC BAA-1303).